The sequence spans 1783 residues: uncharacterized protein (1783 aa).

The helical transmembrane segment at 16–36 (FFLLFGIIFVLFSIIFLETSI) threads the bilayer. A compositionally biased stretch (low complexity) spans 105–119 (GSDSGQSNGSGDNQN). Positions 105–125 (GSDSGQSNGSGDNQNKTIPRK) are disordered. 8 consecutive transmembrane segments (helical) span residues 917–937 (VSTV…ILLI), 967–987 (VFAG…AFLL), 1010–1030 (WLSF…ISWI), 1084–1104 (LFTY…AGTI), 1660–1680 (FLLG…GISM), 1709–1729 (FIPA…GVLI), 1730–1750 (GIQA…FEFL), and 1752–1772 (YMVG…YFWI).

Belongs to the ABC-4 integral membrane protein family.

It is found in the cell membrane. This is an uncharacterized protein from Mycoplasma genitalium (strain ATCC 33530 / DSM 19775 / NCTC 10195 / G37) (Mycoplasmoides genitalium).